The primary structure comprises 224 residues: Putative ankyrin repeat protein R845 (224 aa).

ANK repeat units follow at residues 1–14 (MVEY…DVRS), 15–44 (NYDH…DVSM), 46–74 (YDYI…DPRT), 75–104 (NNDK…DIRI), 105–134 (DNDS…DIRA), 136–164 (NDYS…DVRA), 165–194 (DNDY…DFRA), and 196–224 (NDCA…VCPY).

The polypeptide is Putative ankyrin repeat protein R845 (Acanthamoeba polyphaga mimivirus (APMV)).